The sequence spans 170 residues: Cathelicidin antimicrobial peptide (170 aa).

The signal sequence occupies residues 1-30 (MKTQRDGHSLGGWSLMLLLLGLLMPLAIVA). The propeptide at 31-131 (QVLSYKEAVL…DISCDKDNRR (101 aa)) is cathelin-like domain (CLD). Cystine bridges form between C86–C97 and C108–C125. Residues 150-162 (FKRIVQRIKDFLQ) are active core.

It belongs to the cathelicidin family. In terms of assembly, monomer, homodimer or homotrimer (in vitro). Oligomerizes as tetra- or hexamer in solution (in vitro). Proteolytically cleaved by proteinase PRTN3 into antibacterial peptide LL-37. Proteolytically cleaved by cathepsin CTSG and neutrophil elastase ELANE. In terms of processing, resistant to proteolytic degradation in solution, and when bound to both zwitterionic (mimicking mammalian membranes) and negatively charged membranes (mimicking bacterial membranes). Post-translationally, after secretion onto the skin surface, the CAMP gene product is processed by a serine protease-dependent mechanism into multiple novel antimicrobial peptides distinct from and shorter than cathelicidin LL-37. These peptides show enhanced antimicrobial action, acquiring the ability to kill skin pathogens such as S.aureus, E.coli and C.albicans. These peptides have lost the ability to stimulate CXCL8/IL8 release from keratinocytes. The peptides act synergistically, killing bacteria at lower concentrations when present together, and maintain activity at increased salt condition.

The protein localises to the secreted. Its subcellular location is the vesicle. Functionally, antimicrobial protein that is an integral component of the innate immune system. Binds to bacterial lipopolysaccharides (LPS). Acts via neutrophil N-formyl peptide receptors to enhance the release of CXCL2. Postsecretory processing generates multiple cathelicidin antimicrobial peptides with various lengths which act as a topical antimicrobial defense in sweat on skin. The unprocessed precursor form, cathelicidin antimicrobial peptide, inhibits the growth of Gram-negative E.coli and E.aerogenes with efficiencies comparable to that of the mature peptide LL-37 (in vitro). In terms of biological role, antimicrobial peptide that is an integral component of the innate immune system. Binds to bacterial lipopolysaccharides (LPS). Causes membrane permeabilization by forming transmembrane pores (in vitro). Causes lysis of E.coli. Exhibits antimicrobial activity against Gram-negative bacteria such as P.aeruginosa, S.typhimurium, E.aerogenes, E.coli and P.syringae, Gram-positive bacteria such as L.monocytogenes, S.epidermidis, S.pyogenes and S.aureus, as well as vancomycin-resistant enterococci (in vitro). Exhibits antimicrobial activity against methicillin-resistant S.aureus, P.mirabilis, and C.albicans in low-salt media, but not in media containing 100 mM NaCl (in vitro). Forms chiral supramolecular assemblies with quinolone signal (PQS) molecules of P.aeruginosa, which may lead to interference of bacterial quorum signaling and perturbance of bacterial biofilm formation. May form supramolecular fiber-like assemblies on bacterial membranes. Induces cytokine and chemokine producation as well as TNF/TNFA and CSF2/GMCSF production in normal human keratinocytes. Exhibits hemolytic activity against red blood cells. Its function is as follows. Exhibits antimicrobial activity against E.coli and B.megaterium (in vitro). The chain is Cathelicidin antimicrobial peptide from Hylobates moloch (Silvery gibbon).